Consider the following 118-residue polypeptide: UPF0102 protein lpg2994 (118 aa).

It belongs to the UPF0102 family.

This Legionella pneumophila subsp. pneumophila (strain Philadelphia 1 / ATCC 33152 / DSM 7513) protein is UPF0102 protein lpg2994.